We begin with the raw amino-acid sequence, 247 residues long: Protein GrpE (247 aa).

2 disordered regions span residues 1-68 and 226-247; these read MKKN…KNDD and PAEK…KNEN. Basic and acidic residues-rich tracts occupy residues 7-35, 43-54, and 228-247; these read KHAD…KDEQ, TSKENPQEDKAE, and EKQD…KNEN.

The protein belongs to the GrpE family. In terms of assembly, homodimer.

It localises to the cytoplasm. Participates actively in the response to hyperosmotic and heat shock by preventing the aggregation of stress-denatured proteins, in association with DnaK and GrpE. It is the nucleotide exchange factor for DnaK and may function as a thermosensor. Unfolded proteins bind initially to DnaJ; upon interaction with the DnaJ-bound protein, DnaK hydrolyzes its bound ATP, resulting in the formation of a stable complex. GrpE releases ADP from DnaK; ATP binding to DnaK triggers the release of the substrate protein, thus completing the reaction cycle. Several rounds of ATP-dependent interactions between DnaJ, DnaK and GrpE are required for fully efficient folding. The sequence is that of Protein GrpE from Treponema denticola (strain ATCC 35405 / DSM 14222 / CIP 103919 / JCM 8153 / KCTC 15104).